A 411-amino-acid polypeptide reads, in one-letter code: Serine hydroxymethyltransferase (411 aa).

Residues Leu119 and 123-125 (GHL) each bind (6S)-5,6,7,8-tetrahydrofolate. The residue at position 228 (Lys228) is an N6-(pyridoxal phosphate)lysine. 351 to 353 (SPF) serves as a coordination point for (6S)-5,6,7,8-tetrahydrofolate.

It belongs to the SHMT family. Homodimer. The cofactor is pyridoxal 5'-phosphate.

The protein localises to the cytoplasm. The enzyme catalyses (6R)-5,10-methylene-5,6,7,8-tetrahydrofolate + glycine + H2O = (6S)-5,6,7,8-tetrahydrofolate + L-serine. It participates in one-carbon metabolism; tetrahydrofolate interconversion. Its pathway is amino-acid biosynthesis; glycine biosynthesis; glycine from L-serine: step 1/1. Functionally, catalyzes the reversible interconversion of serine and glycine with tetrahydrofolate (THF) serving as the one-carbon carrier. This reaction serves as the major source of one-carbon groups required for the biosynthesis of purines, thymidylate, methionine, and other important biomolecules. Also exhibits THF-independent aldolase activity toward beta-hydroxyamino acids, producing glycine and aldehydes, via a retro-aldol mechanism. The sequence is that of Serine hydroxymethyltransferase from Clostridium novyi (strain NT).